The primary structure comprises 512 residues: 2-isopropylmalate synthase (512 aa).

Residues 4–266 (IQFFDTTLRD…ETNIVLNQFK (263 aa)) form the Pyruvate carboxyltransferase domain. Residues aspartate 13, histidine 201, histidine 203, and asparagine 237 each contribute to the Mn(2+) site. The segment at 390-512 (ELKHLQVQYV…SKQADFEEVK (123 aa)) is regulatory domain.

This sequence belongs to the alpha-IPM synthase/homocitrate synthase family. LeuA type 1 subfamily. As to quaternary structure, homodimer. It depends on Mn(2+) as a cofactor.

It is found in the cytoplasm. The catalysed reaction is 3-methyl-2-oxobutanoate + acetyl-CoA + H2O = (2S)-2-isopropylmalate + CoA + H(+). It functions in the pathway amino-acid biosynthesis; L-leucine biosynthesis; L-leucine from 3-methyl-2-oxobutanoate: step 1/4. Functionally, catalyzes the condensation of the acetyl group of acetyl-CoA with 3-methyl-2-oxobutanoate (2-ketoisovalerate) to form 3-carboxy-3-hydroxy-4-methylpentanoate (2-isopropylmalate). The chain is 2-isopropylmalate synthase from Listeria monocytogenes serotype 4b (strain CLIP80459).